A 252-amino-acid chain; its full sequence is uncharacterized protein (252 aa).

The N-terminal stretch at 1–23 (MKLLKTVPAIVMLAGGMFASLNA) is a signal peptide. The segment at 231-252 (EPPESAPEHTDRRTTLSLGYSM) is disordered.

This is an uncharacterized protein from Escherichia coli (strain K12).